A 98-amino-acid chain; its full sequence is NADH-ubiquinone oxidoreductase chain 4L (98 aa).

3 helical membrane passes run 1-21, 29-49, and 61-81; these read MTLIHMNILMAFSMSLVGLLM, ALLCLEGMMLSLFVLAALTIL, and IILLVFAACEAAIGLALLVMV.

Belongs to the complex I subunit 4L family. In terms of assembly, core subunit of respiratory chain NADH dehydrogenase (Complex I) which is composed of 45 different subunits.

The protein localises to the mitochondrion inner membrane. The catalysed reaction is a ubiquinone + NADH + 5 H(+)(in) = a ubiquinol + NAD(+) + 4 H(+)(out). In terms of biological role, core subunit of the mitochondrial membrane respiratory chain NADH dehydrogenase (Complex I) which catalyzes electron transfer from NADH through the respiratory chain, using ubiquinone as an electron acceptor. Part of the enzyme membrane arm which is embedded in the lipid bilayer and involved in proton translocation. In Eschrichtius robustus (California gray whale), this protein is NADH-ubiquinone oxidoreductase chain 4L (MT-ND4L).